A 77-amino-acid polypeptide reads, in one-letter code: uncharacterized protein (77 aa).

A helical membrane pass occupies residues 13–33 (VPVIRLSVFLHFFFVFPFCLL).

It localises to the membrane. This is an uncharacterized protein from Saccharomyces cerevisiae (strain ATCC 204508 / S288c) (Baker's yeast).